The primary structure comprises 158 residues: NADH-quinone oxidoreductase subunit B (158 aa).

Positions 37, 38, 102, and 132 each coordinate [4Fe-4S] cluster.

The protein belongs to the complex I 20 kDa subunit family. NDH-1 is composed of 14 different subunits. Subunits NuoB, C, D, E, F, and G constitute the peripheral sector of the complex. [4Fe-4S] cluster serves as cofactor.

Its subcellular location is the cell inner membrane. The enzyme catalyses a quinone + NADH + 5 H(+)(in) = a quinol + NAD(+) + 4 H(+)(out). In terms of biological role, NDH-1 shuttles electrons from NADH, via FMN and iron-sulfur (Fe-S) centers, to quinones in the respiratory chain. Couples the redox reaction to proton translocation (for every two electrons transferred, four hydrogen ions are translocated across the cytoplasmic membrane), and thus conserves the redox energy in a proton gradient. The chain is NADH-quinone oxidoreductase subunit B from Legionella pneumophila (strain Paris).